The chain runs to 107 residues: Large ribosomal subunit protein eL21 (107 aa).

Belongs to the eukaryotic ribosomal protein eL21 family.

The protein is Large ribosomal subunit protein eL21 (rpl21e) of Aeropyrum pernix (strain ATCC 700893 / DSM 11879 / JCM 9820 / NBRC 100138 / K1).